A 200-amino-acid polypeptide reads, in one-letter code: NADH-quinone oxidoreductase chain 10 (200 aa).

5 helical membrane passes run 2–22 (MTFA…MVVI), 26–46 (PVHS…LFVL), 51–71 (FVAM…FLFV), 90–110 (LPLA…AFSG), and 144–164 (VLMF…AIVL).

The protein belongs to the complex I subunit 6 family. As to quaternary structure, NDH-1 is composed of at least 14 different subunits, Nqo1 to Nqo14. The complex has a L-shaped structure, with the hydrophobic arm (subunits Nqo7, Nqo8, Nqo10 to Nqo14) embedded in the inner membrane and the hydrophilic peripheral arm (subunits Nqo1 to Nqo6, Nqo9) protruding into the bacterial cytoplasm. The hydrophilic domain contains all the redox centers.

It localises to the cell inner membrane. It catalyses the reaction a quinone + NADH + 5 H(+)(in) = a quinol + NAD(+) + 4 H(+)(out). Functionally, NDH-1 shuttles electrons from NADH, via FMN and iron-sulfur (Fe-S) centers, to quinones in the respiratory chain. The immediate electron acceptor for the enzyme in this species is believed to be ubiquinone. Couples the redox reaction to proton translocation (for every two electrons transferred, four hydrogen ions are translocated across the cytoplasmic membrane), and thus conserves the redox energy in a proton gradient. The protein is NADH-quinone oxidoreductase chain 10 of Paracoccus denitrificans.